Reading from the N-terminus, the 68-residue chain is Large ribosomal subunit protein uL29 (68 aa).

The protein belongs to the universal ribosomal protein uL29 family.

The polypeptide is Large ribosomal subunit protein uL29 (Persephonella marina (strain DSM 14350 / EX-H1)).